The following is a 291-amino-acid chain: Formamidopyrimidine-DNA glycosylase (291 aa).

The Schiff-base intermediate with DNA role is filled by P2. E3 acts as the Proton donor in catalysis. Residue K60 is the Proton donor; for beta-elimination activity of the active site. Positions 97, 116, and 161 each coordinate DNA. The segment at 246-280 adopts an FPG-type zinc-finger fold; it reads WVYNRAGEPCRVCGMPIQRIRLAGRSSHFCSECQT. R270 serves as the catalytic Proton donor; for delta-elimination activity.

This sequence belongs to the FPG family. As to quaternary structure, monomer. Zn(2+) serves as cofactor.

The enzyme catalyses Hydrolysis of DNA containing ring-opened 7-methylguanine residues, releasing 2,6-diamino-4-hydroxy-5-(N-methyl)formamidopyrimidine.. It catalyses the reaction 2'-deoxyribonucleotide-(2'-deoxyribose 5'-phosphate)-2'-deoxyribonucleotide-DNA = a 3'-end 2'-deoxyribonucleotide-(2,3-dehydro-2,3-deoxyribose 5'-phosphate)-DNA + a 5'-end 5'-phospho-2'-deoxyribonucleoside-DNA + H(+). Functionally, involved in base excision repair of DNA damaged by oxidation or by mutagenic agents. Acts as a DNA glycosylase that recognizes and removes damaged bases. Has a preference for oxidized purines, such as 7,8-dihydro-8-oxoguanine (8-oxoG). Has AP (apurinic/apyrimidinic) lyase activity and introduces nicks in the DNA strand. Cleaves the DNA backbone by beta-delta elimination to generate a single-strand break at the site of the removed base with both 3'- and 5'-phosphates. The sequence is that of Formamidopyrimidine-DNA glycosylase from Nostoc punctiforme (strain ATCC 29133 / PCC 73102).